An 89-amino-acid polypeptide reads, in one-letter code: Small ribosomal subunit protein uS15 (89 aa).

This sequence belongs to the universal ribosomal protein uS15 family. As to quaternary structure, part of the 30S ribosomal subunit. Forms a bridge to the 50S subunit in the 70S ribosome, contacting the 23S rRNA.

Functionally, one of the primary rRNA binding proteins, it binds directly to 16S rRNA where it helps nucleate assembly of the platform of the 30S subunit by binding and bridging several RNA helices of the 16S rRNA. Its function is as follows. Forms an intersubunit bridge (bridge B4) with the 23S rRNA of the 50S subunit in the ribosome. The polypeptide is Small ribosomal subunit protein uS15 (Buchnera aphidicola subsp. Baizongia pistaciae (strain Bp)).